The primary structure comprises 89 residues: Translation initiation factor IF-1, chloroplastic (89 aa).

The 73-residue stretch at 1–73 (MKEKEAKWVV…TKGRIIYRLP (73 aa)) folds into the S1-like domain.

Belongs to the IF-1 family. As to quaternary structure, component of the 30S ribosomal translation pre-initiation complex which assembles on the 30S ribosome in the order IF-2 and IF-3, IF-1 and N-formylmethionyl-tRNA(fMet); mRNA recruitment can occur at any time during PIC assembly.

The protein localises to the plastid. It localises to the chloroplast. In terms of biological role, one of the essential components for the initiation of protein synthesis. Stabilizes the binding of IF-2 and IF-3 on the 30S subunit to which N-formylmethionyl-tRNA(fMet) subsequently binds. Helps modulate mRNA selection, yielding the 30S pre-initiation complex (PIC). Upon addition of the 50S ribosomal subunit IF-1, IF-2 and IF-3 are released leaving the mature 70S translation initiation complex. The chain is Translation initiation factor IF-1, chloroplastic from Jasminum nudiflorum (Winter jasmine).